The sequence spans 258 residues: Ribosome maturation factor RimP (258 aa).

Disordered regions lie at residues 48-88 (PQRP…PTSA) and 212-258 (IFKK…AEND). Residues 215-224 (KPQKPGKKPG) show a composition bias toward basic residues.

This sequence belongs to the RimP family.

It localises to the cytoplasm. In terms of biological role, required for maturation of 30S ribosomal subunits. This chain is Ribosome maturation factor RimP, found in Desulfovibrio desulfuricans (strain ATCC 27774 / DSM 6949 / MB).